Here is a 149-residue protein sequence, read N- to C-terminus: Glycophorin-A (149 aa).

A signal peptide spans Met-1–Ala-19. The Extracellular segment spans residues Ser-20–Glu-90. Ser-21 carries O-linked (GalNAc...) serine glycosylation. Residues Thr-22, Thr-23, and Thr-29 are each glycosylated (O-linked (GalNAc...) threonine). An O-linked (GalNAc...) serine glycan is attached at Ser-30. O-linked (GalNAc...) threonine glycosylation is present at Thr-31. O-linked (GalNAc...) serine glycosylation is present at Ser-32. O-linked (GalNAc...) threonine glycosylation is present at Thr-35. O-linked (GalNAc...) serine glycans are attached at residues Ser-37 and Ser-40. The O-linked (GalNAc...) threonine glycan is linked to Thr-43. An O-linked (GalNAc...) serine glycan is attached at Ser-44. Residues Thr-51 and Thr-55 are each glycosylated (O-linked (GalNAc...) threonine). O-linked (GalNAc...) serine glycosylation is present at Ser-62. O-linked (GalNAc...) threonine glycosylation is present at Thr-68. Residues Ile-91–Ile-113 form a helical membrane-spanning segment. Residues Arg-114 to Gln-149 are Cytoplasmic-facing. Residues Ser-122–Gln-149 are disordered. Ser-137 and Ser-147 each carry phosphoserine.

This sequence belongs to the glycophorin-A family. In terms of assembly, homodimer. Component of the ankyrin-1 complex in the erythrocyte, composed of ANK1, RHCE, RHAG, SLC4A1, EPB42, GYPA, GYPB and AQP1. Interacts with SLC4A1; a GYPA monomer is bound at each end of the SLC4A1 dimer forming a heterotetramer.

It is found in the cell membrane. Its function is as follows. Component of the ankyrin-1 complex, a multiprotein complex involved in the stability and shape of the erythrocyte membrane. Glycophorin A is the major intrinsic membrane protein of the erythrocyte. The N-terminal glycosylated segment, which lies outside the erythrocyte membrane, has MN blood group receptors. Appears to be important for the function of SLC4A1 and is required for high activity of SLC4A1. May be involved in translocation of SLC4A1 to the plasma membrane. This chain is Glycophorin-A, found in Pan troglodytes (Chimpanzee).